A 1021-amino-acid polypeptide reads, in one-letter code: Contactin-1 (1021 aa).

The signal sequence occupies residues methionine 1–glycine 20. Ig-like C2-type domains lie at proline 41–serine 131, proline 137–phenylalanine 223, proline 241–tyrosine 326, proline 331–lysine 407, proline 413–valine 500, and proline 504–arginine 603. 2 disulfide bridges follow: cysteine 65/cysteine 114 and cysteine 158/cysteine 211. N-linked (GlcNAc...) asparagine glycans are attached at residues asparagine 208 and asparagine 258. A disulfide bond links cysteine 263 and cysteine 310. Asparagine 338 carries an N-linked (GlcNAc...) asparagine glycan. 2 disulfide bridges follow: cysteine 352-cysteine 391 and cysteine 436-cysteine 484. N-linked (GlcNAc...) asparagine glycosylation is found at asparagine 457, asparagine 473, asparagine 494, and asparagine 521. Residues cysteine 526 and cysteine 585 are joined by a disulfide bond. Asparagine 593 carries N-linked (GlcNAc...) asparagine glycosylation. Fibronectin type-III domains are found at residues proline 608–alanine 706, alanine 711–aspartate 808, alanine 813–serine 908, and glutamine 909–serine 1002. Positions serine 695–glycine 719 are disordered. Asparagine 935 carries N-linked (GlcNAc...) asparagine glycosylation. Serine 1001 is lipidated: GPI-anchor amidated serine. Residues serine 1002–phenylalanine 1021 constitute a propeptide, removed in mature form.

The protein belongs to the immunoglobulin superfamily. Contactin family. In terms of assembly, monomer. Interacts with NOTCH1. Interacts with CNTNAP1 in cis form and TNR. Binds to the carbonic-anhydrase like domain of PTPRZ1. Detected in a complex with NRCAM and PTPRB. Interacts with TASOR. In terms of tissue distribution, expressed by neurons, oligodendrocytes and their progenitors (at protein level). Myelination regulates the expression being down-regulated when neurons are in contact with Schwann cells.

It is found in the cell membrane. In terms of biological role, contactins mediate cell surface interactions during nervous system development. Involved in the formation of paranodal axo-glial junctions in myelinated peripheral nerves and in the signaling between axons and myelinating glial cells via its association with CNTNAP1. Participates in oligodendrocytes generation by acting as a ligand of NOTCH1. Its association with NOTCH1 promotes NOTCH1 activation through the released notch intracellular domain (NICD) and subsequent translocation to the nucleus. Interaction with TNR induces a repulsion of neurons and an inhibition of neurite outgrowth. This chain is Contactin-1 (Cntn1), found in Rattus norvegicus (Rat).